The sequence spans 330 residues: Olfactory receptor 5P73 (330 aa).

At 1-28 the chain is on the extracellular side; sequence MAFLEDGNHTTVTEFFLLGLTDDPVLRD. The N-linked (GlcNAc...) asparagine glycan is linked to Asn-8. Residues 29–49 traverse the membrane as a helical segment; the sequence is ILFIIILCIYLVTVSGNLSTI. Topologically, residues 50-57 are cytoplasmic; it reads LLIRVSSQ. A helical membrane pass occupies residues 58–78; that stretch reads LHHPMYFILSHLASVDIGISS. At 79 to 102 the chain is on the extracellular side; that stretch reads SVTPNMLATFLVKQNTISYIGCSI. A disulfide bond links Cys-100 and Cys-192. The helical transmembrane segment at 103–123 threads the bilayer; sequence QFTSAAFFGTVECFLLATMAY. Over 124–136 the chain is Cytoplasmic; sequence DRFVAICNPLLYS. The helical transmembrane segment at 137–157 threads the bilayer; the sequence is TKMSTEACIQLVVGSYIQGFL. At 158–199 the chain is on the extracellular side; the sequence is NASFFTLSFFSLFFCGPNRINDFYCDFAPLLELSCSDVTVAV. Residues 200 to 220 traverse the membrane as a helical segment; the sequence is VITSISAGFITLTTVFVIAIS. At 221 to 240 the chain is on the cytoplasmic side; it reads YSCIFITIMKMHSTESRCKA. Residues 241-261 form a helical membrane-spanning segment; the sequence is FSTCTSHLTAVILFYGTAIFI. The Extracellular segment spans residues 262–274; the sequence is YVMPKSSYSTDQN. A helical membrane pass occupies residues 275–295; the sequence is KVLSIFYTVVIPMLNPLIYSL. Residues 296–330 lie on the Cytoplasmic side of the membrane; it reads RNNEIKEALKRHLGKKVFSYGNLFCKTHYNHNYPV.

This sequence belongs to the G-protein coupled receptor 1 family.

Its subcellular location is the cell membrane. Potential odorant receptor. The polypeptide is Olfactory receptor 5P73 (Mus musculus (Mouse)).